The sequence spans 341 residues: L-threonine 3-dehydrogenase (341 aa).

Cys38 contributes to the Zn(2+) binding site. Active-site charge relay system residues include Thr40 and His43. The Zn(2+) site is built by His63, Glu64, Cys93, Cys96, Cys99, and Cys107. NAD(+) contacts are provided by residues Ile175, Asp195, Arg200, 262-264, and 286-287; these read LGI and IY.

This sequence belongs to the zinc-containing alcohol dehydrogenase family. As to quaternary structure, homotetramer. Zn(2+) serves as cofactor.

The protein resides in the cytoplasm. The enzyme catalyses L-threonine + NAD(+) = (2S)-2-amino-3-oxobutanoate + NADH + H(+). It participates in amino-acid degradation; L-threonine degradation via oxydo-reductase pathway; glycine from L-threonine: step 1/2. In terms of biological role, catalyzes the NAD(+)-dependent oxidation of L-threonine to 2-amino-3-ketobutyrate. The polypeptide is L-threonine 3-dehydrogenase (Escherichia fergusonii (strain ATCC 35469 / DSM 13698 / CCUG 18766 / IAM 14443 / JCM 21226 / LMG 7866 / NBRC 102419 / NCTC 12128 / CDC 0568-73)).